A 471-amino-acid polypeptide reads, in one-letter code: Glutamate--tRNA ligase (471 aa).

Residues 9 to 19 (PSPTGYLHVGG) carry the 'HIGH' region motif. Residues Cys98, Cys100, Cys125, and His127 each coordinate Zn(2+). The 'KMSKS' region motif lies at 237 to 241 (KLSKR). Position 240 (Lys240) interacts with ATP.

Belongs to the class-I aminoacyl-tRNA synthetase family. Glutamate--tRNA ligase type 1 subfamily. As to quaternary structure, monomer. Requires Zn(2+) as cofactor.

It localises to the cytoplasm. It catalyses the reaction tRNA(Glu) + L-glutamate + ATP = L-glutamyl-tRNA(Glu) + AMP + diphosphate. In terms of biological role, catalyzes the attachment of glutamate to tRNA(Glu) in a two-step reaction: glutamate is first activated by ATP to form Glu-AMP and then transferred to the acceptor end of tRNA(Glu). This chain is Glutamate--tRNA ligase, found in Shigella sonnei (strain Ss046).